A 308-amino-acid polypeptide reads, in one-letter code: Aspartate carbamoyltransferase catalytic subunit (308 aa).

Carbamoyl phosphate-binding residues include R55 and T56. An L-aspartate-binding site is contributed by K83. Carbamoyl phosphate-binding residues include R105, H133, and Q136. The L-aspartate site is built by R166 and R220. Carbamoyl phosphate is bound by residues G261 and P262.

It belongs to the aspartate/ornithine carbamoyltransferase superfamily. ATCase family. In terms of assembly, heterododecamer (2C3:3R2) of six catalytic PyrB chains organized as two trimers (C3), and six regulatory PyrI chains organized as three dimers (R2).

The catalysed reaction is carbamoyl phosphate + L-aspartate = N-carbamoyl-L-aspartate + phosphate + H(+). It participates in pyrimidine metabolism; UMP biosynthesis via de novo pathway; (S)-dihydroorotate from bicarbonate: step 2/3. Catalyzes the condensation of carbamoyl phosphate and aspartate to form carbamoyl aspartate and inorganic phosphate, the committed step in the de novo pyrimidine nucleotide biosynthesis pathway. The polypeptide is Aspartate carbamoyltransferase catalytic subunit (Chlorobium phaeobacteroides (strain DSM 266 / SMG 266 / 2430)).